The following is an 844-amino-acid chain: Translation initiation factor IF-2 (844 aa).

Over residues 1 to 11 (MTEDVKADVPK) the composition is skewed to basic and acidic residues. 2 disordered regions span residues 1–35 (MTEDVKADVPKKLSIQRRTKTTVSGTTTSGKSKAV) and 79–248 (RLEA…KGAA). Residues 21 to 33 (TTVSGTTTSGKSK) are compositionally biased toward low complexity. Over residues 79 to 161 (RLEAEKAATK…AAEEAKRYAE (83 aa)) the composition is skewed to basic and acidic residues. A compositionally biased stretch (acidic residues) spans 162-175 (ADDSDNESSSEDYS). The segment covering 200–210 (RGKNKVAKAKK) has biased composition (basic residues). Basic and acidic residues predominate over residues 211–237 (GGRDDENSKNSKNERESNRKNQKDAKF). Positions 343–513 (TRAPVVTIMG…LLQSEVLELT (171 aa)) constitute a tr-type G domain. The segment at 352 to 359 (GHVDHGKT) is G1. 352 to 359 (GHVDHGKT) is a GTP binding site. The interval 377–381 (GITQH) is G2. The segment at 399 to 402 (DTPG) is G3. GTP contacts are provided by residues 399–403 (DTPGH) and 453–456 (NKID). The tract at residues 453 to 456 (NKID) is G4. Residues 489 to 491 (SAK) form a G5 region.

It belongs to the TRAFAC class translation factor GTPase superfamily. Classic translation factor GTPase family. IF-2 subfamily.

It is found in the cytoplasm. One of the essential components for the initiation of protein synthesis. Protects formylmethionyl-tRNA from spontaneous hydrolysis and promotes its binding to the 30S ribosomal subunits. Also involved in the hydrolysis of GTP during the formation of the 70S ribosomal complex. The polypeptide is Translation initiation factor IF-2 (Haemophilus influenzae (strain PittGG)).